A 184-amino-acid chain; its full sequence is uncharacterized protein (184 aa).

The tract at residues 32-52 (PCPRSRTQGQSRRSETHTISR) is disordered.

Its subcellular location is the mitochondrion. This is an uncharacterized protein from Arabidopsis thaliana (Mouse-ear cress).